Consider the following 1078-residue polypeptide: Protein U90 (1078 aa).

Positions 1–12 (MESAKDTTSTSM) are enriched in polar residues. Disordered stretches follow at residues 1–28 (MESA…SNEE), 464–483 (SPTD…PTRQ), 703–732 (HMNN…DHKT), and 781–818 (ESED…DCTS).

This is Protein U90 (U90) from Homo sapiens (Human).